Here is a 164-residue protein sequence, read N- to C-terminus: CDP-archaeol synthase (164 aa).

A run of 4 helical transmembrane segments spans residues 3-23, 53-73, 77-97, and 126-146; these read LFVF…AVLA, GLAI…LLHP, LLDA…GAFI, and SLYA…TPII.

Belongs to the CDP-archaeol synthase family. Mg(2+) serves as cofactor.

The protein localises to the cell membrane. The enzyme catalyses 2,3-bis-O-(geranylgeranyl)-sn-glycerol 1-phosphate + CTP + H(+) = CDP-2,3-bis-O-(geranylgeranyl)-sn-glycerol + diphosphate. It functions in the pathway membrane lipid metabolism; glycerophospholipid metabolism. Functionally, catalyzes the formation of CDP-2,3-bis-(O-geranylgeranyl)-sn-glycerol (CDP-archaeol) from 2,3-bis-(O-geranylgeranyl)-sn-glycerol 1-phosphate (DGGGP) and CTP. This reaction is the third ether-bond-formation step in the biosynthesis of archaeal membrane lipids. The chain is CDP-archaeol synthase from Pyrobaculum arsenaticum (strain DSM 13514 / JCM 11321 / PZ6).